We begin with the raw amino-acid sequence, 863 residues long: Chromatin assembly factor 1 subunit A (863 aa).

Disordered stretches follow at residues 1 to 353 (MVVV…EEKD), 423 to 466 (LNGL…PDRS), 513 to 579 (DSDE…RQRM), and 749 to 863 (VTRD…PATA). Residues 42-54 (LNPEPKECNEPKR) are compositionally biased toward basic and acidic residues. The residue at position 111 (Thr-111) is a Phosphothreonine. Phosphoserine is present on Ser-118. Over residues 144 to 154 (SEGTTEPTIPL) the composition is skewed to low complexity. Composition is skewed to acidic residues over residues 155–168 (TEEE…EDVD) and 177–196 (QDSD…EQQQ). Residues 205–237 (ESVLSTGSTSSASVIASSPEPSKSAPTTPASTS) are compositionally biased toward low complexity. 2 stretches are compositionally biased toward basic and acidic residues: residues 254–353 (QEQE…EEKD) and 457–466 (QKADDGPDRS). Acidic residues-rich tracts occupy residues 513–524 (DSDEEWEEEEPG) and 532–547 (GDDD…DDDG). The span at 569 to 579 (DPEKQKVRQRM) shows a compositional bias: basic and acidic residues. A compositionally biased stretch (low complexity) spans 760-771 (NSPTTNSSTTPS). Over residues 806–815 (DTEDDEDDDC) the composition is skewed to acidic residues. Positions 821-835 (QSGSSEQDINTSLPQ) are enriched in polar residues. Residues 850-863 (TAALALPCPTPATA) show a composition bias toward low complexity.

This sequence belongs to the CHAF1A family.

Its subcellular location is the nucleus. Functionally, acts as a component of the histone chaperone complex chromatin assembly factor 1 (CAF-1), which assembles histone octamers onto DNA during replication and repair. CAF-1 performs the first step of the nucleosome assembly process, bringing newly synthesized histones H3 and H4 to replicating DNA; histones H2A/H2B can bind to this chromatin precursor subsequent to DNA replication to complete the histone octamer. The chain is Chromatin assembly factor 1 subunit A (chaf1a) from Danio rerio (Zebrafish).